The following is a 199-amino-acid chain: Holliday junction branch migration complex subunit RuvA (199 aa).

Positions 1-63 (MIASVRGEVL…EDSMTLYGFS (63 aa)) are domain I. The interval 64 to 141 (DTESKDLFSL…DAVATTAGAA (78 aa)) is domain II. Residues 141 to 145 (ASGAV) form a flexible linker region. Residues 146 to 199 (VGSSIRDQIVEALEGLGFPIKQAEQATDSVLAESPEATTSVALRSALSLLGKTR) are domain III.

Belongs to the RuvA family. As to quaternary structure, homotetramer. Forms an RuvA(8)-RuvB(12)-Holliday junction (HJ) complex. HJ DNA is sandwiched between 2 RuvA tetramers; dsDNA enters through RuvA and exits via RuvB. An RuvB hexamer assembles on each DNA strand where it exits the tetramer. Each RuvB hexamer is contacted by two RuvA subunits (via domain III) on 2 adjacent RuvB subunits; this complex drives branch migration. In the full resolvosome a probable DNA-RuvA(4)-RuvB(12)-RuvC(2) complex forms which resolves the HJ.

Its subcellular location is the cytoplasm. In terms of biological role, the RuvA-RuvB-RuvC complex processes Holliday junction (HJ) DNA during genetic recombination and DNA repair, while the RuvA-RuvB complex plays an important role in the rescue of blocked DNA replication forks via replication fork reversal (RFR). RuvA specifically binds to HJ cruciform DNA, conferring on it an open structure. The RuvB hexamer acts as an ATP-dependent pump, pulling dsDNA into and through the RuvAB complex. HJ branch migration allows RuvC to scan DNA until it finds its consensus sequence, where it cleaves and resolves the cruciform DNA. The polypeptide is Holliday junction branch migration complex subunit RuvA (Rhodococcus erythropolis (strain PR4 / NBRC 100887)).